The primary structure comprises 607 residues: DNA mismatch repair protein MutL (607 aa).

The disordered stretch occupies residues 374-411; the sequence is RTEAGNEHVPSANRIQPPDPSIDMPDEPVPEQTDEPVA. Residues 397–407 are compositionally biased toward acidic residues; sequence MPDEPVPEQTD.

It belongs to the DNA mismatch repair MutL/HexB family.

Its function is as follows. This protein is involved in the repair of mismatches in DNA. It is required for dam-dependent methyl-directed DNA mismatch repair. May act as a 'molecular matchmaker', a protein that promotes the formation of a stable complex between two or more DNA-binding proteins in an ATP-dependent manner without itself being part of a final effector complex. This chain is DNA mismatch repair protein MutL, found in Exiguobacterium sibiricum (strain DSM 17290 / CCUG 55495 / CIP 109462 / JCM 13490 / 255-15).